The following is a 644-amino-acid chain: MYFQSFYFLALLLATAVYGQVASPELHSLSRRNWKKPPPFPSTNASYAPVIRSCDSSEIMVNSLPRGELPDLENDFIEKRLSNANEALTTFLQSKNTTADLDLSSIVGDNGPRLGIAVSGGGWRSMLFGGGALAALDSRSNETTLGGLLQSAHYITGADGGSWLLSSLAVNEFRTIQNISKSIWYTRLGIFFIEETHFGDLKNYYTNVVDEVNQKAAAGFNVSLTDYWGRAIARHFVGQLRGGPNLTYSSVQNASWFQTAEYPYPLIVTQGLTGGLPDGSNGTATNSSIYEISPYYLTSFDNNVRSYTPTQYLGTNYSNGTAVDGKCVTQFDNVGFLVGTSSTRYNEALIDVSLRQSRMSRRLGFTLRHMRINGSSVSFYPNPYTDATDIAGNATAVSEDIVDTPYLDLFDGGYDGQNIPIWPLLQPERKLDVVFAFDSSGDTSNFWPNGSSLVATYERVTQRASDAVYDVEDFVHVPTPETFVNLGLNANPTFFGCDGRNTTRGDVPVDHNTPPLVVYMPNTPWTMKSNLVDHRYRIANSEIQALIQNGFVATTQDNSTDFASCLACAVVQRSLERRNQSTSAACQQCFSQYCWNGTVDNTPVDDDSKNPTYNPAVKTSSASGVHANILLSFFVLLATLLVTA.

The signal sequence occupies residues 1-19 (MYFQSFYFLALLLATAVYG). N-linked (GlcNAc...) asparagine glycosylation is found at N44, N96, N141, N178, N221, N245, N253, N281, N286, N316, N319, N373, N393, N449, N501, N558, N579, and N596. Residues 53–600 (SCDSSEIMVN…SQYCWNGTVD (548 aa)) form the PLA2c domain.

It belongs to the lysophospholipase family.

It is found in the secreted. The enzyme catalyses a 1-acyl-sn-glycero-3-phosphocholine + H2O = sn-glycerol 3-phosphocholine + a fatty acid + H(+). In terms of biological role, catalyzes the release of fatty acids from lysophospholipids. The chain is Probable lysophospholipase 2 (plb2) from Schizosaccharomyces pombe (strain 972 / ATCC 24843) (Fission yeast).